The sequence spans 25 residues: Hemocyanin subunit 2 (25 aa).

This sequence belongs to the tyrosinase family. Hemocyanin subfamily. Hemolymph.

The protein resides in the secreted. It is found in the extracellular space. Functionally, hemocyanins are copper-containing oxygen carriers occurring freely dissolved in the hemolymph of many mollusks and arthropods. The polypeptide is Hemocyanin subunit 2 (Carcinus maenas (Common shore crab)).